A 657-amino-acid chain; its full sequence is MPRYTVHVRGEWLAVPCQDGKLTVGWLGREAVRRYMKNKPDNGGFTSVDEVQFLVHRCKGLGLLDNEDELEVALEDNEFVEVVIEGDVMSPDFIPSQPEGVFLYSKYREPEKYIALDGDSLSTEDLVNLGKGRYKIKLTSIAEKKVQQSREVIDSIIKERTVVYGITTGFGKFARTVIPANKLQELQVNLVRSHSSGVGKPLSPERCRMLLALRINVLAKGYSGISLETLKQVIEAFNASCLSYVPEKGTVGASGDLAPLSHLALGLIGEGKMWSPKSGWADAKYVLEAHGLKPIVLKPKEGLALINGTQMITSLGCEALERASAIARQADIVAALTLEVLKGTTKAFDTDIHAVRPHRGQIEVAFRFRSLLDSDHHPSEIAESHRFCDRVQDAYTLRCCPQVHGVVNDTIAFVKDIITTELNSATDNPMVFASRGETISGGNFHGEYPAKALDYLAIGVHELAAISERRIERLCNPSLSELPAFLVAEGGLNSGFMIAHCTAAALVSESKALCHPSSVDSLSTSAATEDHVSMGGWAARKALRVVEHVEQVLAIELLAACQGIEFLRPLKTTTPLEKVYDLVRSVVRPWIKDRFMAPDIEAAHRLLLDQKVWEVAAPYIEKYRMEHIPESRPLSPTAFSLESLRKNSATIPESDDL.

Residues 253–255 (ASG) constitute a cross-link (5-imidazolinone (Ala-Gly)). At Ser-254 the chain carries 2,3-didehydroalanine (Ser). Phosphothreonine is present on Thr-396. At Ser-635 the chain carries Phosphoserine. Thr-637 bears the Phosphothreonine mark. Residue Ser-648 is modified to Phosphoserine.

It belongs to the PAL/histidase family. Post-translationally, contains an active site 4-methylidene-imidazol-5-one (MIO), which is formed autocatalytically by cyclization and dehydration of residues Ala-Ser-Gly.

The enzyme catalyses L-histidine = trans-urocanate + NH4(+). Its pathway is amino-acid degradation; L-histidine degradation into L-glutamate; N-formimidoyl-L-glutamate from L-histidine: step 1/3. The polypeptide is Histidine ammonia-lyase (Hal) (Mus musculus (Mouse)).